A 2971-amino-acid chain; its full sequence is uncharacterized protein (2971 aa).

The interval 929–964 (SANFSNGPEESSLSTRLHIQKKRKAKKQRLETRRQK) is disordered. A compositionally biased stretch (polar residues) spans 936–945 (PEESSLSTRL). Over residues 946 to 955 (HIQKKRKAKK) the composition is skewed to basic residues.

The protein localises to the plastid. It localises to the chloroplast. This is an uncharacterized protein from Chlamydomonas reinhardtii (Chlamydomonas smithii).